The primary structure comprises 783 residues: uncharacterized protein (783 aa).

A disordered region spans residues 1–22; it reads MVNTRGYTTLPNVEEPANNSQD. Topologically, residues 1 to 109 are cytoplasmic; it reads MVNTRGYTTL…SKIGNVMVMR (109 aa). The helical; Signal-anchor for type II membrane protein transmembrane segment at 110–127 threads the bilayer; that stretch reads RIFYIMMMSIIAALIIAS. At 128–783 the chain is on the extracellular side; that stretch reads DRLPNGKARG…NLHGINTNEF (656 aa). 2 N-linked (GlcNAc...) asparagine glycosylation sites follow: N139 and N213. A PA domain is found at 241-333; that stretch reads HNGQLNNIPV…GTGDALTPEW (93 aa). N-linked (GlcNAc...) asparagine glycosylation occurs at N529.

It is found in the cell membrane. This is an uncharacterized protein from Saccharomyces cerevisiae (strain ATCC 204508 / S288c) (Baker's yeast).